Consider the following 434-residue polypeptide: Zinc carboxypeptidase (434 aa).

A signal peptide spans 1-33; that stretch reads MSPKRRRLMAAALGACVALVLPLHAGSAQPSTA. Residues 34–114 constitute a propeptide, activation peptide; that stretch reads KTPERTVFEV…DFTDPQVGTQ (81 aa). The Peptidase M14 domain maps to 122–423; sequence GYHNFQETVT…SAVELFLSYS (302 aa). 2 residues coordinate Zn(2+): histidine 183 and glutamate 186. The segment at 270–295 is disordered; the sequence is GSSSSGSSETTAARRRSPPRRSPHPH. Positions 282 to 293 are enriched in basic residues; it reads ARRRSPPRRSPH. Zn(2+) is bound at residue histidine 315. Glutamate 388 (proton donor/acceptor) is an active-site residue.

The protein belongs to the peptidase M14 family. Zn(2+) is required as a cofactor.

The enzyme catalyses Releases a C-terminal residue, which may be hydrophobic or positively charged.. Its function is as follows. Carboxypeptidase that possesses the specificities of both mammalian Cpase A and B. Thus shows broad substrate specificity, being able to cleave Cbz-Gly-Leu, Cbz-Gly-Val, Cbz-Gly-Phe, Cbz-Gly-Lys and Bz-Gly-Arg in vitro. The sequence is that of Zinc carboxypeptidase from Saccharothrix mutabilis subsp. capreolus (Streptomyces capreolus).